The sequence spans 279 residues: Phosphatidylglycerol--prolipoprotein diacylglyceryl transferase (279 aa).

3 consecutive transmembrane segments (helical) span residues 18-38 (LSVR…YFVA), 55-75 (IIFY…VIFQ), and 89-109 (IWHG…AGVI). Residue Arg137 participates in a 1,2-diacyl-sn-glycero-3-phospho-(1'-sn-glycerol) binding. The next 2 helical transmembrane spans lie at 203 to 223 (LGET…FIEG) and 235 to 255 (IRVA…LIVY).

This sequence belongs to the Lgt family.

Its subcellular location is the cell membrane. The enzyme catalyses L-cysteinyl-[prolipoprotein] + a 1,2-diacyl-sn-glycero-3-phospho-(1'-sn-glycerol) = an S-1,2-diacyl-sn-glyceryl-L-cysteinyl-[prolipoprotein] + sn-glycerol 1-phosphate + H(+). It functions in the pathway protein modification; lipoprotein biosynthesis (diacylglyceryl transfer). In terms of biological role, catalyzes the transfer of the diacylglyceryl group from phosphatidylglycerol to the sulfhydryl group of the N-terminal cysteine of a prolipoprotein, the first step in the formation of mature lipoproteins. The protein is Phosphatidylglycerol--prolipoprotein diacylglyceryl transferase of Staphylococcus aureus (strain bovine RF122 / ET3-1).